The primary structure comprises 40 residues: Large ribosomal subunit protein bL33c (40 aa).

The protein belongs to the bacterial ribosomal protein bL33 family.

The protein resides in the plastid. The protein localises to the chloroplast. This is Large ribosomal subunit protein bL33c (rpl33) from Pisum sativum (Garden pea).